Here is a 225-residue protein sequence, read N- to C-terminus: MISWISGELVELWQTNQKFFLLINCQGLGYEIQVLESLFLKLKTNQITNKNITLWIKHIKKEDSDLLFGFSSKDQKNFFIEILNIRGVGSQIGMGILSKFSISEVINAINTQNKKLICSVPGIGQKMSERLILELKSKFRNELKIQEEKSKDEFHIKDNKINKIVSDIELTLKSLNYTKNEIKSILPIISKEIDSLTKKEKDTSFENLLMLAMNYLDNDSSNIVR.

The segment at 1 to 71 (MISWISGELV…EDSDLLFGFS (71 aa)) is domain I. Residues 72–150 (SKDQKNFFIE…NELKIQEEKS (79 aa)) are domain II. The segment at 151–161 (KDEFHIKDNKI) is flexible linker. Positions 161–225 (INKIVSDIEL…LDNDSSNIVR (65 aa)) are domain III.

This sequence belongs to the RuvA family. As to quaternary structure, homotetramer. Forms an RuvA(8)-RuvB(12)-Holliday junction (HJ) complex. HJ DNA is sandwiched between 2 RuvA tetramers; dsDNA enters through RuvA and exits via RuvB. An RuvB hexamer assembles on each DNA strand where it exits the tetramer. Each RuvB hexamer is contacted by two RuvA subunits (via domain III) on 2 adjacent RuvB subunits; this complex drives branch migration. In the full resolvosome a probable DNA-RuvA(4)-RuvB(12)-RuvC(2) complex forms which resolves the HJ.

The protein resides in the cytoplasm. Functionally, the RuvA-RuvB-RuvC complex processes Holliday junction (HJ) DNA during genetic recombination and DNA repair, while the RuvA-RuvB complex plays an important role in the rescue of blocked DNA replication forks via replication fork reversal (RFR). RuvA specifically binds to HJ cruciform DNA, conferring on it an open structure. The RuvB hexamer acts as an ATP-dependent pump, pulling dsDNA into and through the RuvAB complex. HJ branch migration allows RuvC to scan DNA until it finds its consensus sequence, where it cleaves and resolves the cruciform DNA. The chain is Holliday junction branch migration complex subunit RuvA from Prochlorococcus marinus (strain MIT 9312).